The chain runs to 495 residues: UDP-glycosyltransferase 73C11 (495 aa).

H24 acts as the Proton acceptor in catalysis. H24 serves as a coordination point for an anthocyanidin. Residue D129 is the Charge relay of the active site. UDP-alpha-D-glucose contacts are provided by Q358, H373, W376, N377, S378, and E381. G396 lines the an anthocyanidin pocket. Residues D397 and Q398 each contribute to the UDP-alpha-D-glucose site.

This sequence belongs to the UDP-glycosyltransferase family.

It carries out the reaction oleanolate + UDP-alpha-D-glucose = oleanolate 3-O-beta-D-glucoside + UDP + H(+). Functionally, catalyzes the transfer of a glucose (Glc) moiety from UDP-Glc to the C-3 position of the oleanane sapogenins oleanolate and hederagenin, and to the C-28 carboxylic group of the lupane sapogenin betulinate. The monoglucosylated hederagenin 3-O-beta-D-glucoside is a feeding deterrent of the yellow-striped flea beetle (Phyllotreta nemorum). This chain is UDP-glycosyltransferase 73C11, found in Barbarea vulgaris (Yellow rocket).